A 514-amino-acid chain; its full sequence is Leucine-rich repeat-containing protein 14B (514 aa).

The stretch at 104–141 is one LRR 1; degenerate repeat; that stretch reads RRRLRVADLTGIRDVQVQRCPCGRALGRWGRTQLLART. An LRR 2; degenerate repeat occupies 185–209; sequence RVHCPSFRADSLSPSQLLHVLRLAG. The stretch at 238–277 is one LRR 4; degenerate repeat; that stretch reads FPRLASLTLPTKAFDAPPTYASTPDGEDPLLASIARELSK. LRR repeat units lie at residues 278–302, 303–334, 335–350, 359–386, and 387–411; these read MAQL…LGPL, QTPL…AHLE, VLDL…YPST, SRTL…GLSP, and CHRL…LFTA.

Belongs to the PRAME family. LRRC14 subfamily.

The sequence is that of Leucine-rich repeat-containing protein 14B from Homo sapiens (Human).